Reading from the N-terminus, the 255-residue chain is Small ribosomal subunit protein eS1A (255 aa).

Over residues 1 to 18 the composition is skewed to basic residues; it reads MAVGKNKRLSKGKKGQKK. The disordered stretch occupies residues 1 to 20; sequence MAVGKNKRLSKGKKGQKKRV. Alanine 2 is modified (N-acetylalanine; partial). Phosphothreonine is present on threonine 245. Lysine 248 participates in a covalent cross-link: Glycyl lysine isopeptide (Lys-Gly) (interchain with G-Cter in ubiquitin). Threonine 254 bears the Phosphothreonine mark.

Belongs to the eukaryotic ribosomal protein eS1 family. Component of the small ribosomal subunit. Mature ribosomes consist of a small (40S) and a large (60S) subunit. The 40S subunit contains about 33 different proteins and 1 molecule of RNA (18S). The 60S subunit contains about 49 different proteins and 3 molecules of RNA (25S, 5.8S and 5S).

The protein resides in the cytoplasm. The protein is Small ribosomal subunit protein eS1A of Saccharomyces cerevisiae (strain RM11-1a) (Baker's yeast).